The chain runs to 519 residues: Exodeoxyribonuclease 7 large subunit (519 aa).

Residues 500–519 form a disordered region; the sequence is VGRGKTRKPKEEPPAQGSLL.

Belongs to the XseA family. Heterooligomer composed of large and small subunits.

The protein resides in the cytoplasm. It carries out the reaction Exonucleolytic cleavage in either 5'- to 3'- or 3'- to 5'-direction to yield nucleoside 5'-phosphates.. Bidirectionally degrades single-stranded DNA into large acid-insoluble oligonucleotides, which are then degraded further into small acid-soluble oligonucleotides. In Cereibacter sphaeroides (strain ATCC 17023 / DSM 158 / JCM 6121 / CCUG 31486 / LMG 2827 / NBRC 12203 / NCIMB 8253 / ATH 2.4.1.) (Rhodobacter sphaeroides), this protein is Exodeoxyribonuclease 7 large subunit.